An 80-amino-acid chain; its full sequence is MSRSGQPPDLKKYMDKKLQIKLNANRMVTGTLRGFDQFMNLVVDNTVEVNGNDKTDIGMVVIRGNSIVTVEALEPVGRSS.

The 72-residue stretch at 5–76 folds into the Sm domain; it reads GQPPDLKKYM…IVTVEALEPV (72 aa).

The protein belongs to the snRNP Sm proteins family.

The protein resides in the nucleus. In terms of biological role, probable common Sm protein, is found in U1 and U2 snRNPs and may be part of the spliceosome. In Arabidopsis thaliana (Mouse-ear cress), this protein is Probable small nuclear ribonucleoprotein G.